The following is a 138-amino-acid chain: Vesicle transport protein GOT1B (138 aa).

Residue Met1 is modified to N-acetylmethionine. Over 1 to 9 the chain is Cytoplasmic; sequence MISLTDTQK. Residues 10-30 form a helical membrane-spanning segment; that stretch reads IGMGLTGFGVFFLFFGMILFF. The Lumenal portion of the chain corresponds to 31–32; it reads DK. Residues 33–53 form a helical membrane-spanning segment; it reads ALLAIGNVLFVAGLAFVIGLE. Over 54 to 68 the chain is Cytoplasmic; sequence RTFRFFFQKHKMKAT. The helical transmembrane segment at 69-89 threads the bilayer; that stretch reads GFFLGGVFVVLIGWPLIGMIF. Residue Glu90 is a topological domain, lumenal. A helical transmembrane segment spans residues 91 to 109; that stretch reads IYGFFLLFRGFFPVVVGFI. Topologically, residues 110–138 are cytoplasmic; sequence RRVPVLGSLLNLPGIRSFVDKVGESNNMV.

This sequence belongs to the GOT1 family.

The protein localises to the golgi apparatus membrane. Its function is as follows. May be involved in fusion of ER-derived transport vesicles with the Golgi complex. This chain is Vesicle transport protein GOT1B, found in Bos taurus (Bovine).